We begin with the raw amino-acid sequence, 432 residues long: Tol-Pal system protein TolB (432 aa).

A signal peptide spans 1 to 29 (MMRNVWKSGLRRSAWIGLLMVLCVGVARA).

It belongs to the TolB family. The Tol-Pal system is composed of five core proteins: the inner membrane proteins TolA, TolQ and TolR, the periplasmic protein TolB and the outer membrane protein Pal. They form a network linking the inner and outer membranes and the peptidoglycan layer.

Its subcellular location is the periplasm. Part of the Tol-Pal system, which plays a role in outer membrane invagination during cell division and is important for maintaining outer membrane integrity. The chain is Tol-Pal system protein TolB from Ralstonia nicotianae (strain ATCC BAA-1114 / GMI1000) (Ralstonia solanacearum).